A 543-amino-acid chain; its full sequence is Sensor histidine kinase DcuS (543 aa).

Over 1–20 (MRHSLPYRMLRKRPMKLSTT) the chain is Cytoplasmic. A helical membrane pass occupies residues 21 to 41 (VILMVSAVLFSVLLVVHLIYF). Residues 42-181 (SQISDMTRDG…VTQQINDSRW (140 aa)) lie on the Periplasmic side of the membrane. (R)-malate is bound by residues 107-110 (RYSH), Lys-121, 140-142 (GFL), and Arg-147. Residues 182 to 202 (SIIWSVLFGMLVGLIGTCILV) form a helical membrane-spanning segment. Over 203–543 (KVLKKILFGL…IPWDGERSNR (341 aa)) the chain is Cytoplasmic. The 112-residue stretch at 212-323 (LEPYEISTLF…IIGAISTFRD (112 aa)) folds into the PAS domain. The Histidine kinase domain maps to 346–538 (ERSHEFMNKL…QFFVQIPWDG (193 aa)). Position 349 is a phosphohistidine; by autocatalysis (His-349).

Homodimer. Autophosphorylated. The phosphoryl group is rapidly transferred to DcuR.

Its subcellular location is the cell inner membrane. It catalyses the reaction ATP + protein L-histidine = ADP + protein N-phospho-L-histidine.. Member of the two-component regulatory system DcuR/DcuS. Involved in the C4-dicarboxylate-stimulated regulation of the genes encoding the anaerobic fumarate respiratory system (frdABCD; nuoAN; dcuB; sdhCDAB; etc.). Weakly regulates the aerobic C4-dicarboxylate transporter dctA. Activates DcuR by phosphorylation. This is Sensor histidine kinase DcuS (dcuS) from Escherichia coli O157:H7.